The sequence spans 673 residues: Annexin A6 (673 aa).

Ala-2 is subject to N-acetylalanine. Phosphoserine is present on Ser-13. 8 Annexin repeats span residues 20 to 91 (FDPN…GLMR), 92 to 163 (PPAY…VLLQ), 175 to 247 (DLVQ…AVVK), 251 to 322 (STPE…KLSG), 363 to 434 (FNPD…GLMM), 435 to 506 (PPAH…SLAT), 521 to 595 (EDAQ…AIVQ), and 599 to 670 (NKPL…ALCG). Position 30 is a phosphotyrosine (Tyr-30). N6-acetyllysine occurs at positions 63, 68, 75, and 81. Tyr-201 carries the post-translational modification Phosphotyrosine. An N6-acetyllysine mark is found at Lys-306, Lys-370, and Lys-418. At Ser-422 the chain carries Phosphoserine. Residue Lys-483 is modified to N6-acetyllysine. At Ser-537 the chain carries Phosphoserine. Lys-620 bears the N6-acetyllysine mark.

This sequence belongs to the annexin family. In terms of processing, phosphorylated in response to growth factor stimulation.

It is found in the cytoplasm. The protein resides in the melanosome. Its function is as follows. May associate with CD21. May regulate the release of Ca(2+) from intracellular stores. This is Annexin A6 (ANXA6) from Homo sapiens (Human).